Here is an 897-residue protein sequence, read N- to C-terminus: Coiled-coil domain-containing protein lobo (897 aa).

The interval 27 to 49 (EIDEQRRSQGSESDFADEMEGEF) is disordered. Residues 40-49 (DFADEMEGEF) are compositionally biased toward acidic residues. Coiled coils occupy residues 269–306 (DLKSHLEEDMAEVHRQKEAEEKRIQDEIIRKQMEDLEL) and 801–858 (SLLN…QRLT).

Belongs to the DRC7 family. As to expression, testis-specific (at protein level).

The protein localises to the cell projection. It is found in the cilium. The protein resides in the flagellum. It localises to the cytoplasm. Its subcellular location is the cytoskeleton. The protein localises to the cilium axoneme. Functionally, key component of the nexin-dynein regulatory complex (N-DRC), essential for N-DRC integrity. Involved in the regulation of flagellar motility. Involved in sperm motility. Required for the sperm to enter in the coiled storage seminal receptacle (SR) tubule. This Drosophila melanogaster (Fruit fly) protein is Coiled-coil domain-containing protein lobo (lobo).